Reading from the N-terminus, the 217-residue chain is Thiamine-phosphate synthase (217 aa).

Residues 44 to 48 (QYREK) and N76 contribute to the 4-amino-2-methyl-5-(diphosphooxymethyl)pyrimidine site. Residues D77 and D96 each contribute to the Mg(2+) site. S115 lines the 4-amino-2-methyl-5-(diphosphooxymethyl)pyrimidine pocket. 141–143 (TKT) contributes to the 2-[(2R,5Z)-2-carboxy-4-methylthiazol-5(2H)-ylidene]ethyl phosphate binding site. Residue K144 participates in 4-amino-2-methyl-5-(diphosphooxymethyl)pyrimidine binding. Residues G172 and 192 to 193 (VS) each bind 2-[(2R,5Z)-2-carboxy-4-methylthiazol-5(2H)-ylidene]ethyl phosphate.

Belongs to the thiamine-phosphate synthase family. Requires Mg(2+) as cofactor.

The enzyme catalyses 2-[(2R,5Z)-2-carboxy-4-methylthiazol-5(2H)-ylidene]ethyl phosphate + 4-amino-2-methyl-5-(diphosphooxymethyl)pyrimidine + 2 H(+) = thiamine phosphate + CO2 + diphosphate. It carries out the reaction 2-(2-carboxy-4-methylthiazol-5-yl)ethyl phosphate + 4-amino-2-methyl-5-(diphosphooxymethyl)pyrimidine + 2 H(+) = thiamine phosphate + CO2 + diphosphate. It catalyses the reaction 4-methyl-5-(2-phosphooxyethyl)-thiazole + 4-amino-2-methyl-5-(diphosphooxymethyl)pyrimidine + H(+) = thiamine phosphate + diphosphate. Its pathway is cofactor biosynthesis; thiamine diphosphate biosynthesis; thiamine phosphate from 4-amino-2-methyl-5-diphosphomethylpyrimidine and 4-methyl-5-(2-phosphoethyl)-thiazole: step 1/1. Its function is as follows. Condenses 4-methyl-5-(beta-hydroxyethyl)thiazole monophosphate (THZ-P) and 2-methyl-4-amino-5-hydroxymethyl pyrimidine pyrophosphate (HMP-PP) to form thiamine monophosphate (TMP). The polypeptide is Thiamine-phosphate synthase (Lawsonia intracellularis (strain PHE/MN1-00)).